The sequence spans 300 residues: UDP-N-acetylenolpyruvoylglucosamine reductase (300 aa).

Residues 30–194 (RVGGPADFFV…IGATFVLDSD (165 aa)) form the FAD-binding PCMH-type domain. Arg-174 is a catalytic residue. The active-site Proton donor is Ser-223. Glu-293 is a catalytic residue.

The protein belongs to the MurB family. FAD is required as a cofactor.

The protein localises to the cytoplasm. The catalysed reaction is UDP-N-acetyl-alpha-D-muramate + NADP(+) = UDP-N-acetyl-3-O-(1-carboxyvinyl)-alpha-D-glucosamine + NADPH + H(+). Its pathway is cell wall biogenesis; peptidoglycan biosynthesis. Functionally, cell wall formation. The chain is UDP-N-acetylenolpyruvoylglucosamine reductase from Geobacter sulfurreducens (strain ATCC 51573 / DSM 12127 / PCA).